We begin with the raw amino-acid sequence, 211 residues long: ATP phosphoribosyltransferase (211 aa).

It belongs to the ATP phosphoribosyltransferase family. Short subfamily. As to quaternary structure, heteromultimer composed of HisG and HisZ subunits.

It localises to the cytoplasm. It catalyses the reaction 1-(5-phospho-beta-D-ribosyl)-ATP + diphosphate = 5-phospho-alpha-D-ribose 1-diphosphate + ATP. It participates in amino-acid biosynthesis; L-histidine biosynthesis; L-histidine from 5-phospho-alpha-D-ribose 1-diphosphate: step 1/9. Catalyzes the condensation of ATP and 5-phosphoribose 1-diphosphate to form N'-(5'-phosphoribosyl)-ATP (PR-ATP). Has a crucial role in the pathway because the rate of histidine biosynthesis seems to be controlled primarily by regulation of HisG enzymatic activity. The chain is ATP phosphoribosyltransferase from Pseudomonas fluorescens (strain Pf0-1).